Here is a 518-residue protein sequence, read N- to C-terminus: Integrator complex subunit 14 (518 aa).

The VWFA domain maps to 2 to 204 (PTVVVMDVSL…KNVQSMFGKL (203 aa)). Residues Ser10, Ser12, and Thr86 each coordinate Mg(2+).

Belongs to the Integrator subunit 14 family. Component of the Integrator complex, composed of core subunits INTS1, INTS2, INTS3, INTS4, INTS5, INTS6, INTS7, INTS8, INTS9/RC74, INTS10, INTS11/CPSF3L, INTS12, INTS13, INTS14 and INTS15. The core complex associates with protein phosphatase 2A subunits PPP2CA and PPP2R1A, to form the Integrator-PP2A (INTAC) complex. INTS14 is part of the tail subcomplex, composed of INTS10, INTS13, INTS14 and INTS15.

Its subcellular location is the nucleus. Component of the integrator complex, a multiprotein complex that terminates RNA polymerase II (Pol II) transcription in the promoter-proximal region of genes. The integrator complex provides a quality checkpoint during transcription elongation by driving premature transcription termination of transcripts that are unfavorably configured for transcriptional elongation: the complex terminates transcription by (1) catalyzing dephosphorylation of the C-terminal domain (CTD) of Pol II subunit POLR2A/RPB1 and SUPT5H/SPT5, (2) degrading the exiting nascent RNA transcript via endonuclease activity and (3) promoting the release of Pol II from bound DNA. The integrator complex is also involved in terminating the synthesis of non-coding Pol II transcripts, such as enhancer RNAs (eRNAs), small nuclear RNAs (snRNAs), telomerase RNAs and long non-coding RNAs (lncRNAs). Within the integrator complex, INTS14 is part of the integrator tail module that acts as a platform for the recruitment of transcription factors at promoters. The chain is Integrator complex subunit 14 from Xenopus tropicalis (Western clawed frog).